The following is a 395-amino-acid chain: NAD(P)H-quinone oxidoreductase subunit H, chloroplastic (395 aa).

This sequence belongs to the complex I 49 kDa subunit family. NDH is composed of at least 16 different subunits, 5 of which are encoded in the nucleus.

It is found in the plastid. It localises to the chloroplast thylakoid membrane. It carries out the reaction a plastoquinone + NADH + (n+1) H(+)(in) = a plastoquinol + NAD(+) + n H(+)(out). It catalyses the reaction a plastoquinone + NADPH + (n+1) H(+)(in) = a plastoquinol + NADP(+) + n H(+)(out). NDH shuttles electrons from NAD(P)H:plastoquinone, via FMN and iron-sulfur (Fe-S) centers, to quinones in the photosynthetic chain and possibly in a chloroplast respiratory chain. The immediate electron acceptor for the enzyme in this species is believed to be plastoquinone. Couples the redox reaction to proton translocation, and thus conserves the redox energy in a proton gradient. This Dioscorea elephantipes (Elephant's foot yam) protein is NAD(P)H-quinone oxidoreductase subunit H, chloroplastic.